We begin with the raw amino-acid sequence, 103 residues long: Putative glutaredoxin-C14 (103 aa).

One can recognise a Glutaredoxin domain in the interval 1–102 (MDRVMKLASE…PMLKNAGALW (102 aa)). A disulfide bridge connects residues cysteine 21 and cysteine 24. The Responsive for interaction with TGA factors motif lies at 100–103 (ALWL).

Belongs to the glutaredoxin family. CC-type subfamily.

Its subcellular location is the cytoplasm. The protein localises to the nucleus. Has a glutathione-disulfide oxidoreductase activity in the presence of NADPH and glutathione reductase. Reduces low molecular weight disulfides and proteins. This Oryza sativa subsp. japonica (Rice) protein is Putative glutaredoxin-C14 (GRXC14).